Here is a 497-residue protein sequence, read N- to C-terminus: Anthranilate synthase component 1 (497 aa).

L-tryptophan-binding positions include S49 and P271 to L273. G312–T313 contacts chorismate. E339 is a Mg(2+) binding site. Chorismate contacts are provided by residues R447, G461–G463, and G463. Mg(2+) is bound at residue E476.

The protein belongs to the anthranilate synthase component I family. In terms of assembly, heterotetramer consisting of two non-identical subunits: a beta subunit (TrpG) and a large alpha subunit (TrpE). Mg(2+) serves as cofactor.

It catalyses the reaction chorismate + L-glutamine = anthranilate + pyruvate + L-glutamate + H(+). The protein operates within amino-acid biosynthesis; L-tryptophan biosynthesis; L-tryptophan from chorismate: step 1/5. Feedback inhibited by tryptophan. Functionally, part of a heterotetrameric complex that catalyzes the two-step biosynthesis of anthranilate, an intermediate in the biosynthesis of L-tryptophan. In the first step, the glutamine-binding beta subunit (TrpG) of anthranilate synthase (AS) provides the glutamine amidotransferase activity which generates ammonia as a substrate that, along with chorismate, is used in the second step, catalyzed by the large alpha subunit of AS (TrpE) to produce anthranilate. In the absence of TrpG, TrpE can synthesize anthranilate directly from chorismate and high concentrations of ammonia. The chain is Anthranilate synthase component 1 (trpE) from Acinetobacter calcoaceticus.